Reading from the N-terminus, the 449-residue chain is Glucose-6-phosphate isomerase (449 aa).

Residue Glu-291 is the Proton donor of the active site. Catalysis depends on residues His-312 and Lys-426.

The protein belongs to the GPI family.

Its subcellular location is the cytoplasm. The catalysed reaction is alpha-D-glucose 6-phosphate = beta-D-fructose 6-phosphate. It functions in the pathway carbohydrate biosynthesis; gluconeogenesis. The protein operates within carbohydrate degradation; glycolysis; D-glyceraldehyde 3-phosphate and glycerone phosphate from D-glucose: step 2/4. In terms of biological role, catalyzes the reversible isomerization of glucose-6-phosphate to fructose-6-phosphate. The chain is Glucose-6-phosphate isomerase from Enterococcus faecalis (strain ATCC 700802 / V583).